We begin with the raw amino-acid sequence, 189 residues long: uncharacterized protein (189 aa).

Residues Arg-2 to Arg-62 form the HTH tetR-type domain. A DNA-binding region (H-T-H motif) is located at residues Thr-25–Phe-44.

This is an uncharacterized protein from Bacillus subtilis (strain 168).